Here is a 481-residue protein sequence, read N- to C-terminus: uncharacterized protein (481 aa).

The protein belongs to the UbiD family.

This is an uncharacterized protein from Archaeoglobus fulgidus (strain ATCC 49558 / DSM 4304 / JCM 9628 / NBRC 100126 / VC-16).